A 549-amino-acid chain; its full sequence is Cytochrome bc1 complex cytochrome b subunit (549 aa).

A helical membrane pass occupies residues 45-65 (FLLGEIALYSFVVLLITGVYL). Heme-binding residues include histidine 114 and histidine 128. 3 consecutive transmembrane segments (helical) span residues 118 to 138 (ALMFAAAIMVHLARIFFTGAF), 146 to 166 (WVIGSLLLILAMFEGYFGYSL), and 189 to 209 (VIGTWLHWALFGGDFPGTILI). Heme is bound by residues histidine 216 and histidine 231. The next 5 membrane-spanning stretches (helical) occupy residues 217–237 (ILLLPGIILALIGLHLALVWF), 266–286 (SGAFFAAIVGVLGLMGGLLQI), 335–355 (PVWVAVIMGLVFVLLPAYPFL), 381–401 (IGAMAIAFYMVLTLAAMNDII), and 418–438 (IGMVILPPFVYFITYRWCIGL).

Belongs to the cytochrome b family. In terms of assembly, the cytochrome bc1 complex is composed of a cytochrome b (QcrB), the Rieske iron-sulfur protein (QcrA) and a diheme cytochrome c (QcrC) subunit. Heme serves as cofactor.

The protein localises to the cell membrane. It carries out the reaction a quinol + 2 Fe(III)-[cytochrome c](out) = a quinone + 2 Fe(II)-[cytochrome c](out) + 2 H(+)(out). Its function is as follows. Cytochrome b subunit of the cytochrome bc1 complex, an essential component of the respiratory electron transport chain required for ATP synthesis. The bc1 complex catalyzes the oxidation of ubiquinol and the reduction of cytochrome c in the respiratory chain. The bc1 complex operates through a Q-cycle mechanism that couples electron transfer to generation of the proton gradient that drives ATP synthesis. The cytochrome b subunit contains two ubiquinol reactive sites: the oxidation (QP) site and the reduction (QN) site. The chain is Cytochrome bc1 complex cytochrome b subunit (qcrB) from Mycobacterium bovis (strain ATCC BAA-935 / AF2122/97).